Consider the following 81-residue polypeptide: Exodeoxyribonuclease 7 small subunit (81 aa).

The interval 61 to 81 (MNDSDQEVAFETPQGGTGDAD) is disordered.

This sequence belongs to the XseB family. Heterooligomer composed of large and small subunits.

The protein resides in the cytoplasm. The enzyme catalyses Exonucleolytic cleavage in either 5'- to 3'- or 3'- to 5'-direction to yield nucleoside 5'-phosphates.. In terms of biological role, bidirectionally degrades single-stranded DNA into large acid-insoluble oligonucleotides, which are then degraded further into small acid-soluble oligonucleotides. The protein is Exodeoxyribonuclease 7 small subunit of Levilactobacillus brevis (strain ATCC 367 / BCRC 12310 / CIP 105137 / JCM 1170 / LMG 11437 / NCIMB 947 / NCTC 947) (Lactobacillus brevis).